Here is a 360-residue protein sequence, read N- to C-terminus: Alkanal monooxygenase alpha chain (360 aa).

Belongs to the bacterial luciferase oxidoreductase family. In terms of assembly, heterodimer of an alpha and a beta chain.

The catalysed reaction is a long-chain fatty aldehyde + FMNH2 + O2 = a long-chain fatty acid + hnu + FMN + H2O + 2 H(+). In terms of biological role, light-emitting reaction in luminous bacteria. In Photorhabdus luminescens (Xenorhabdus luminescens), this protein is Alkanal monooxygenase alpha chain (luxA).